Reading from the N-terminus, the 296-residue chain is Light-independent protochlorophyllide reductase iron-sulfur ATP-binding protein (296 aa).

ATP-binding positions include 39 to 44 and Lys68; that span reads GIGKST. Position 43 (Ser43) interacts with Mg(2+). Cys124 and Cys158 together coordinate [4Fe-4S] cluster. 209–210 contributes to the ATP binding site; sequence NR.

This sequence belongs to the NifH/BchL/ChlL family. In terms of assembly, homodimer. Protochlorophyllide reductase is composed of three subunits; ChlL, ChlN and ChlB. Requires [4Fe-4S] cluster as cofactor.

The catalysed reaction is chlorophyllide a + oxidized 2[4Fe-4S]-[ferredoxin] + 2 ADP + 2 phosphate = protochlorophyllide a + reduced 2[4Fe-4S]-[ferredoxin] + 2 ATP + 2 H2O. It functions in the pathway porphyrin-containing compound metabolism; chlorophyll biosynthesis (light-independent). Component of the dark-operative protochlorophyllide reductase (DPOR) that uses Mg-ATP and reduced ferredoxin to reduce ring D of protochlorophyllide (Pchlide) to form chlorophyllide a (Chlide). This reaction is light-independent. The L component serves as a unique electron donor to the NB-component of the complex, and binds Mg-ATP. The chain is Light-independent protochlorophyllide reductase iron-sulfur ATP-binding protein from Prochlorococcus marinus (strain MIT 9211).